Reading from the N-terminus, the 206-residue chain is Large ribosomal subunit protein uL4 (206 aa).

The segment at 47–94 is disordered; it reads NRAQKGRSEIAKSTRKPFRQKGTGNARAGMASSPLWRGGGKIFPNSPD.

The protein belongs to the universal ribosomal protein uL4 family. In terms of assembly, part of the 50S ribosomal subunit.

Functionally, one of the primary rRNA binding proteins, this protein initially binds near the 5'-end of the 23S rRNA. It is important during the early stages of 50S assembly. It makes multiple contacts with different domains of the 23S rRNA in the assembled 50S subunit and ribosome. Forms part of the polypeptide exit tunnel. The sequence is that of Large ribosomal subunit protein uL4 from Azoarcus sp. (strain BH72).